Consider the following 192-residue polypeptide: Small ribosomal subunit protein uS4c-2 (192 aa).

Residues 91-155 form the S4 RNA-binding domain; it reads TRLDHLVYRA…PKPPEYLPPY (65 aa).

The protein belongs to the universal ribosomal protein uS4 family. Part of the 30S ribosomal subunit. Contacts protein S5. The interaction surface between S4 and S5 is involved in control of translational fidelity.

The protein resides in the plastid. It is found in the chloroplast. Its function is as follows. One of the primary rRNA binding proteins, it binds directly to 16S rRNA where it nucleates assembly of the body of the 30S subunit. In terms of biological role, with S5 and S12 plays an important role in translational accuracy. The chain is Small ribosomal subunit protein uS4c-2 from Cyanidium caldarium (Red alga).